Reading from the N-terminus, the 2430-residue chain is Transcription factor HIVEP2 (2430 aa).

The disordered stretch occupies residues 1–127; that stretch reads MDTGDTALGQ…SLEGPPWLFP (127 aa). Polar residues-rich tracts occupy residues 11-22 and 96-110; these read KATSRSGETDSV and HSLS…QGMT. C2H2-type zinc fingers lie at residues 189 to 211 and 217 to 239; these read YICP…IRSH and YPCI…RKSH. 3 disordered regions span residues 271–302, 374–418, and 744–995; these read IHSD…PPVP, SEKK…NTNA, and AHGH…SGKH. Residues 381-418 show a composition bias toward polar residues; sequence SEPSLNLLSPHSKGSTDSGYFSRSESAEQQISPPNTNA. Composition is skewed to basic and acidic residues over residues 744 to 753 and 775 to 784; these read AHGHSDRLDP and DPDKMTDLGK. The segment covering 792-804 has biased composition (polar residues); it reads SVIQHTNSLSRPN. Serine 811 bears the Phosphoserine mark. The span at 853–863 shows a compositional bias: polar residues; sequence SKPTPSQQVPQ. The span at 884-908 shows a compositional bias: basic and acidic residues; sequence RVTEEPDKPEKEKEAPTKEPEKPVE. Residues 929–935 carry the Nuclear localization signal motif; it reads PKKKRLR. Serine 942, serine 947, serine 1040, serine 1431, and serine 1435 each carry phosphoserine. Residues 944–974 show a composition bias toward low complexity; it reads GESSFESTGTGLSRSPSQESNLSHSSSFSMS. The segment at 1472 to 1584 is disordered; that stretch reads KKGLSRPQKP…GGQQEEEGKA (113 aa). 2 stretches are compositionally biased toward low complexity: residues 1499 to 1520 and 1560 to 1569; these read SRSS…SASG and SDMSMSPQSS. 2 C2H2-type zinc fingers span residues 1783–1805 and 1811–1835; these read YICE…IRTH and YVCK…SKAH. Disordered regions lie at residues 1848–1931 and 1986–2117; these read SVDD…SSLP and FQSK…SPRR. Acidic residues predominate over residues 1850-1860; the sequence is DDTETEEAENM. The span at 1861-1871 shows a compositional bias: basic and acidic residues; it reads EELHKTSEKHS. The span at 1883-1909 shows a compositional bias: acidic residues; the sequence is DAEESDGEDGDDNDDDDEDDDDFDDQG. The span at 1991 to 2001 shows a compositional bias: basic and acidic residues; it reads TDSEPDKDRLD. Low complexity predominate over residues 2013-2037; the sequence is SSEPSSSPRDFSPSSYRSSPGYDSS. 10 repeat units span residues 2037 to 2040, 2043 to 2046, 2055 to 2058, 2067 to 2070, 2073 to 2076, 2090 to 2093, 2096 to 2099, 2102 to 2105, 2114 to 2117, and 2129 to 2132. The interval 2037–2132 is 10 X 4 AA tandem repeats of S-P-[RGMKC]-[RK]; the sequence is SPCRDNSPKR…TTIRAPSPRR (96 aa). Basic and acidic residues predominate over residues 2062 to 2085; that stretch reads PRRDLSPMRHLSPRKEAALRREMS. Serine 2102 carries the post-translational modification Phosphoserine. Positions 2107-2116 are enriched in basic and acidic residues; it reads ITARRDLSPR. Disordered regions lie at residues 2226–2252, 2268–2309, and 2352–2430; these read PALS…GAPG, KQAP…QEEN, and SIRH…NQLH. Low complexity predominate over residues 2271-2289; that stretch reads PQVLQSSGLPSSPSSPRLL. 2 positions are modified to phosphoserine: serine 2281 and serine 2285. Over residues 2291-2301 the composition is skewed to polar residues; the sequence is KQSTSEDSLNS. The segment covering 2371–2380 has biased composition (basic and acidic residues); it reads PDLHDGEKDT. Positions 2406–2417 are enriched in polar residues; the sequence is FQSSKELSLSTE. 2 positions are modified to phosphoserine: serine 2413 and serine 2415.

In terms of assembly, interacts with TCF4. As to expression, expressed in heart, lung, skeletal muscle and liver. In the brain expressed in cerebral cortex, hippocampus, corpora amygdala and cerebellar cortex.

It is found in the nucleus. Functionally, specifically binds to the DNA sequence 5'-GGGACTTTCC-3' which is found in the enhancer elements of numerous viral promoters such as those of SV40, CMV, or HIV1. In addition, related sequences are found in the enhancer elements of a number of cellular promoters, including those of the class I MHC, interleukin-2 receptor, somatostatin receptor II, and interferon-beta genes. It may act in T-cell activation. In Mus musculus (Mouse), this protein is Transcription factor HIVEP2 (Hivep2).